A 152-amino-acid chain; its full sequence is MKEFTGKFNVQSAEIGIVVADFNETVTKQLVQGATEMLAKFDLENVDVYHVPGAFEIPFMTKQLLAKKEYDGILTLGAVIKGETDHYDLICQNVASGVMNLNLKSNIPITFGILTTDNIEQAMQRAGLKAGNEGAITAQSLLEMISLNRQIN.

5-amino-6-(D-ribitylamino)uracil contacts are provided by residues phenylalanine 22, 54–56, and 78–80; these read AFE and AVI. Residue 83–84 coordinates (2S)-2-hydroxy-3-oxobutyl phosphate; it reads ET. Residue histidine 86 is the Proton donor of the active site. Residue phenylalanine 111 participates in 5-amino-6-(D-ribitylamino)uracil binding. Arginine 125 serves as a coordination point for (2S)-2-hydroxy-3-oxobutyl phosphate.

The protein belongs to the DMRL synthase family.

The enzyme catalyses (2S)-2-hydroxy-3-oxobutyl phosphate + 5-amino-6-(D-ribitylamino)uracil = 6,7-dimethyl-8-(1-D-ribityl)lumazine + phosphate + 2 H2O + H(+). The protein operates within cofactor biosynthesis; riboflavin biosynthesis; riboflavin from 2-hydroxy-3-oxobutyl phosphate and 5-amino-6-(D-ribitylamino)uracil: step 1/2. Its function is as follows. Catalyzes the formation of 6,7-dimethyl-8-ribityllumazine by condensation of 5-amino-6-(D-ribitylamino)uracil with 3,4-dihydroxy-2-butanone 4-phosphate. This is the penultimate step in the biosynthesis of riboflavin. This chain is 6,7-dimethyl-8-ribityllumazine synthase, found in Limosilactobacillus reuteri (strain DSM 20016) (Lactobacillus reuteri).